Here is a 539-residue protein sequence, read N- to C-terminus: GMP synthase [glutamine-hydrolyzing] (539 aa).

The Glutamine amidotransferase type-1 domain maps to 4 to 202 (KILILDFGSQ…VLQIAGAKPD (199 aa)). Cysteine 81 functions as the Nucleophile in the catalytic mechanism. Catalysis depends on residues histidine 176 and glutamate 178. The GMPS ATP-PPase domain maps to 203–395 (WIMSNHIEEA…LGLPPEMVYR (193 aa)). 230-236 (SGGVDSS) provides a ligand contact to ATP.

As to quaternary structure, homodimer.

It catalyses the reaction XMP + L-glutamine + ATP + H2O = GMP + L-glutamate + AMP + diphosphate + 2 H(+). The protein operates within purine metabolism; GMP biosynthesis; GMP from XMP (L-Gln route): step 1/1. In terms of biological role, catalyzes the synthesis of GMP from XMP. The sequence is that of GMP synthase [glutamine-hydrolyzing] from Burkholderia ambifaria (strain MC40-6).